The following is a 531-amino-acid chain: Laccase-4 (531 aa).

Positions 1-19 (MLSSITLLPLLAAVSTPAF) are cleaved as a signal peptide. Plastocyanin-like domains follow at residues 23 to 146 (RNYK…LVIY), 158 to 315 (VDDA…LHYE), and 384 to 507 (SLPT…VSSR). Asn66 is a glycosylation site (N-linked (GlcNAc...) asparagine). His83 and His85 together coordinate Cu cation. Residues Cys104 and Cys528 are joined by a disulfide bond. N-linked (GlcNAc...) asparagine glycosylation occurs at Asn109. The Cu cation site is built by His128 and His130. N-linked (GlcNAc...) asparagine glycosylation is found at Asn186, Asn231, Asn280, and Asn395. 6 residues coordinate Cu cation: His427, His430, His432, His479, Cys480, and His481.

It belongs to the multicopper oxidase family. Homodimer. Requires Cu cation as cofactor. As to expression, in mycelia, at a higher level than LCC1, LCC2 and LCC3.

The protein localises to the secreted. It carries out the reaction 4 hydroquinone + O2 = 4 benzosemiquinone + 2 H2O. Lignin degradation and detoxification of lignin-derived products. The polypeptide is Laccase-4 (LCC4) (Thanatephorus cucumeris (Black scurf of potato)).